Reading from the N-terminus, the 486-residue chain is Bifunctional protein HldE (486 aa).

A ribokinase region spans residues 1-331 (MSTNVADLLH…NALTAESVPV (331 aa)). Residue 207–210 (NLGE) participates in ATP binding. D276 is a catalytic residue. The cytidylyltransferase stretch occupies residues 358-486 (VTNGCFDLLH…STTKLIEKGH (129 aa)).

The protein in the N-terminal section; belongs to the carbohydrate kinase PfkB family. This sequence in the C-terminal section; belongs to the cytidylyltransferase family. Homodimer.

It carries out the reaction D-glycero-beta-D-manno-heptose 7-phosphate + ATP = D-glycero-beta-D-manno-heptose 1,7-bisphosphate + ADP + H(+). The catalysed reaction is D-glycero-beta-D-manno-heptose 1-phosphate + ATP + H(+) = ADP-D-glycero-beta-D-manno-heptose + diphosphate. It participates in nucleotide-sugar biosynthesis; ADP-L-glycero-beta-D-manno-heptose biosynthesis; ADP-L-glycero-beta-D-manno-heptose from D-glycero-beta-D-manno-heptose 7-phosphate: step 1/4. It functions in the pathway nucleotide-sugar biosynthesis; ADP-L-glycero-beta-D-manno-heptose biosynthesis; ADP-L-glycero-beta-D-manno-heptose from D-glycero-beta-D-manno-heptose 7-phosphate: step 3/4. Functionally, catalyzes the phosphorylation of D-glycero-D-manno-heptose 7-phosphate at the C-1 position to selectively form D-glycero-beta-D-manno-heptose-1,7-bisphosphate. In terms of biological role, catalyzes the ADP transfer from ATP to D-glycero-beta-D-manno-heptose 1-phosphate, yielding ADP-D-glycero-beta-D-manno-heptose. This chain is Bifunctional protein HldE, found in Koribacter versatilis (strain Ellin345).